We begin with the raw amino-acid sequence, 37 residues long: uncharacterized protein (37 aa).

The interval 1–37 (MGQVEKARQGQFARPHHSDSQRRVRAWSRIQRRARSF) is disordered. A compositionally biased stretch (basic residues) spans 23–37 (RVRAWSRIQRRARSF).

This is an uncharacterized protein from Bacillus phage phi105 (Bacteriophage phi-105).